The primary structure comprises 309 residues: S-methyl-5'-thioadenosine phosphorylase (309 aa).

Phosphate contacts are provided by residues Thr-19, 64-65 (RH), and 97-98 (SA). A substrate-binding site is contributed by Met-201. Residue Ser-202 coordinates phosphate. 225-227 (DYD) is a substrate binding site.

Belongs to the PNP/MTAP phosphorylase family. MTAP subfamily. As to quaternary structure, homotrimer.

The protein resides in the cytoplasm. It is found in the nucleus. It catalyses the reaction S-methyl-5'-thioadenosine + phosphate = 5-(methylsulfanyl)-alpha-D-ribose 1-phosphate + adenine. It functions in the pathway amino-acid biosynthesis; L-methionine biosynthesis via salvage pathway; S-methyl-5-thio-alpha-D-ribose 1-phosphate from S-methyl-5'-thioadenosine (phosphorylase route): step 1/1. In terms of biological role, catalyzes the reversible phosphorylation of S-methyl-5'-thioadenosine (MTA) to adenine and 5-methylthioribose-1-phosphate. Involved in the breakdown of MTA, a major by-product of polyamine biosynthesis. Responsible for the first step in the methionine salvage pathway after MTA has been generated from S-adenosylmethionine. Has broad substrate specificity with 6-aminopurine nucleosides as preferred substrates. This chain is S-methyl-5'-thioadenosine phosphorylase, found in Tuber melanosporum (strain Mel28) (Perigord black truffle).